Consider the following 257-residue polypeptide: Phosphonates import ATP-binding protein PhnC (257 aa).

One can recognise an ABC transporter domain in the interval 7–251 (IQLKDVSKIY…VFTDIYNGGD (245 aa)). An ATP-binding site is contributed by 40 to 47 (GLSGAGKS).

The protein belongs to the ABC transporter superfamily. Phosphonates importer (TC 3.A.1.9.1) family. In terms of assembly, the complex is composed of two ATP-binding proteins (PhnC), two transmembrane proteins (PhnE) and a solute-binding protein (PhnD).

Its subcellular location is the cell membrane. The catalysed reaction is phosphonate(out) + ATP + H2O = phosphonate(in) + ADP + phosphate + H(+). Its function is as follows. Part of the ABC transporter complex PhnCDE involved in phosphonates import. Responsible for energy coupling to the transport system. The sequence is that of Phosphonates import ATP-binding protein PhnC from Lactobacillus acidophilus (strain ATCC 700396 / NCK56 / N2 / NCFM).